The following is a 129-amino-acid chain: Fluoride-specific ion channel FluC (129 aa).

The next 4 membrane-spanning stretches (helical) occupy residues Leu10–Phe30, Pro35–Leu55, Leu71–Gly91, and Leu105–Ala125. Na(+) contacts are provided by Gly79 and Thr82.

This sequence belongs to the fluoride channel Fluc/FEX (TC 1.A.43) family.

Its subcellular location is the cell inner membrane. It carries out the reaction fluoride(in) = fluoride(out). With respect to regulation, na(+) is not transported, but it plays an essential structural role and its presence is essential for fluoride channel function. Its function is as follows. Fluoride-specific ion channel. Important for reducing fluoride concentration in the cell, thus reducing its toxicity. The sequence is that of Fluoride-specific ion channel FluC from Chlorobium luteolum (strain DSM 273 / BCRC 81028 / 2530) (Pelodictyon luteolum).